Reading from the N-terminus, the 320-residue chain is Protein MRH1 (320 aa).

The Extracellular segment spans residues Met1–Asp34. A helical transmembrane segment spans residues Trp35–Phe55. At Arg56–Arg62 the chain is on the cytoplasmic side. A helical transmembrane segment spans residues Phe63–Ala83. Residues Ser84–Arg116 lie on the Extracellular side of the membrane. Residues Phe117–Thr137 traverse the membrane as a helical segment. At Pro138–Gln141 the chain is on the cytoplasmic side. The chain crosses the membrane as a helical span at residues Met142–Val162. At His163–Lys167 the chain is on the extracellular side. A helical membrane pass occupies residues Trp168–Thr188. Topologically, residues Ser189–Phe204 are cytoplasmic. The helical transmembrane segment at Leu205–Ile225 threads the bilayer. Over Thr226–Gly238 the chain is Extracellular. A helical transmembrane segment spans residues Ile239–Ile259. The Cytoplasmic portion of the chain corresponds to Ala260 to Glu320. Residues Ala285–Glu320 form a disordered region. Ser289 is subject to Phosphoserine. Thr295 is modified (phosphothreonine). The residue at position 299 (Ser299) is a Phosphoserine. Positions Asp301–Glu320 are enriched in basic residues.

Belongs to the archaeal/bacterial/fungal opsin family.

The protein resides in the cell membrane. It is found in the mitochondrion. Its subcellular location is the bud. In Saccharomyces cerevisiae (strain ATCC 204508 / S288c) (Baker's yeast), this protein is Protein MRH1 (MRH1).